We begin with the raw amino-acid sequence, 333 residues long: MADASSRTDTSTVLDTDDKNQMVDGQSGAIVPSNSSDRSDRSDKPMDQKVLRRLAQNREAARKSRLRKKAYVQQLESSKLKLASLEQEINKARQQGIYISSSGDQTHAMSGNGAMTFDLEYARWLEEQNKQINELRTAVNAHASDSDLRLIVDGIMAHYDEIFRLKGVAAKADVFHILSGMWKTPAERCFLWLGGFRSSELLKLLVNQLEPLTEQQLLGLSNLQQSSQQAEDALSQGMEALQQSLADTLAGSLGPSGSSGNVANYMGQMAMAMGKLGTLENFLRQADNLRQQTLHQMQRILTIRQAARALLAIHDYFSRLRALSSLWLARPRE.

Positions 1-14 are enriched in polar residues; it reads MADASSRTDTSTVL. A disordered region spans residues 1 to 48; that stretch reads MADASSRTDTSTVLDTDDKNQMVDGQSGAIVPSNSSDRSDRSDKPMDQ. The segment covering 37–48 has biased composition (basic and acidic residues); that stretch reads DRSDRSDKPMDQ. The 45-residue stretch at 47-91 folds into the bZIP domain; that stretch reads DQKVLRRLAQNREAARKSRLRKKAYVQQLESSKLKLASLEQEINK. Residues 49–69 form a basic motif region; sequence KVLRRLAQNREAARKSRLRKK. The leucine-zipper stretch occupies residues 75–89; that stretch reads LESSKLKLASLEQEI. The DOG1 domain occupies 114–330; that stretch reads AMTFDLEYAR…RALSSLWLAR (217 aa).

This sequence belongs to the bZIP family. As to quaternary structure, interacts with NPR1/NH1. Interacts with NPR3/NH3.

The protein localises to the nucleus. Its function is as follows. Transcriptional regulator involved in defense response. In Oryza sativa subsp. japonica (Rice), this protein is Transcription factor TGA2.2.